Consider the following 932-residue polypeptide: DNA mismatch repair protein MutS (932 aa).

An ATP-binding site is contributed by 615-622; the sequence is GPNMAGKS.

Belongs to the DNA mismatch repair MutS family.

Its function is as follows. This protein is involved in the repair of mismatches in DNA. It is possible that it carries out the mismatch recognition step. This protein has a weak ATPase activity. The protein is DNA mismatch repair protein MutS of Clostridium botulinum (strain Okra / Type B1).